The sequence spans 245 residues: Platelet-derived growth factor subunit B (245 aa).

The signal sequence occupies residues 1–20 (MNRCWALFLSLCCYLRLVSA). Residues 21–81 (EGDPIPEELY…ELESLSRGRR (61 aa)) constitute a propeptide, removed in mature form. N-linked (GlcNAc...) asparagine glycosylation is present at Asn-63. Cystine bridges form between Cys-101/Cys-145, Cys-134/Cys-182, and Cys-138/Cys-184. Positions 195-245 (RSPGSSQEQRARTPQTRVTIRTVRVRRPPKGKHQKFKHTHDKKALKETLGA) are cleaved as a propeptide — removed in mature form. A compositionally biased stretch (basic residues) spans 220-235 (RRPPKGKHQKFKHTHD). A disordered region spans residues 220-245 (RRPPKGKHQKFKHTHDKKALKETLGA). Basic and acidic residues predominate over residues 236–245 (KKALKETLGA).

This sequence belongs to the PDGF/VEGF growth factor family. Antiparallel homodimer; disulfide-linked. Antiparallel heterodimer with PDGFA; disulfide-linked. The PDGFB homodimer interacts with PDGFRA and PDGFRB homodimers, and with heterodimers formed by PDGFRA and PDGFRB. The heterodimer composed of PDGFA and PDGFB interacts with PDGFRB homodimers, and with heterodimers formed by PDGFRA and PDGFRB. Interacts with XLKD1. Interacts with LRP1. Interacts with SORL1 (via the N-terminal ectodomain). Interacts with CD82; this interaction inhibits PDGFB-mediated signaling pathway.

It is found in the secreted. Its function is as follows. Growth factor that plays an essential role in the regulation of embryonic development, cell proliferation, cell migration, survival and chemotaxis. Potent mitogen for cells of mesenchymal origin. Required for normal proliferation and recruitment of pericytes and vascular smooth muscle cells in the central nervous system, skin, lung, heart and placenta. Required for normal blood vessel development, and for normal development of kidney glomeruli. Plays an important role in wound healing. Signaling is modulated by the formation of heterodimers with PDGFA. In Felis catus (Cat), this protein is Platelet-derived growth factor subunit B (PDGFB).